A 1805-amino-acid polypeptide reads, in one-letter code: Kinesin-like protein KIF13A (1805 aa).

Residues 5–352 enclose the Kinesin motor domain; the sequence is KVKVAVRVRP…LRYADRAKRI (348 aa). 102–109 contacts ATP; the sequence is GQTGSGKS. A coiled-coil region spans residues 359–436; the sequence is NEDPNAKVIR…QLESMGISLE (78 aa). Residues 469 to 519 form the FHA domain; that stretch reads HTRVGADTSQDIQLFGIGIQPQHCEIDIASDGDVTLTPKENARSCVNGTLV. Over residues 556-567 the composition is skewed to basic and acidic residues; it reads EKETGPPEHDLD. 2 disordered regions span residues 556-575 and 633-656; these read EKETGPPEHDLDAASEASSE and QQLSPDRQPQSSGPDRLAYSSQTA. Coiled coils occupy residues 602-775 and 1100-1138; these read VQVL…LYGK and DALIKRREYLDEQIKKVSNKTEKTEDDVEREAQLVEQWV. Ser636 bears the Phosphoserine mark. Ser1287 carries the post-translational modification Phosphoserine. The span at 1385 to 1396 shows a compositional bias: polar residues; sequence TPNVHNVSSSRP. A disordered region spans residues 1385–1404; sequence TPNVHNVSSSRPDLSGFDED. Phosphoserine is present on residues Ser1454, Ile1481, Ser1490, and Met1494. The interval 1507–1531 is disordered; the sequence is PSGSNGSSMPVEHNSKREKKIDSEE. The stretch at 1518 to 1547 forms a coiled coil; that stretch reads EHNSKREKKIDSEEEENELEAINRKLISSQ. Residues 1519-1528 are compositionally biased toward basic and acidic residues; that stretch reads HNSKREKKID. Ser1529 and Ser1572 each carry phosphoserine. The span at 1612–1621 shows a compositional bias: low complexity; that stretch reads MVVPSSDSSD. A disordered region spans residues 1612–1645; that stretch reads MVVPSSDSSDQLAIQTKDADSTEHSTPSLVHDFR. Phosphoserine occurs at positions 1648 and 1698. Positions 1749 to 1779 are disordered; the sequence is GLTDSSAGELSSRRSLPNKTGGKTVSDGLHH. The segment covering 1751–1771 has biased composition (polar residues); that stretch reads TDSSAGELSSRRSLPNKTGGK.

This sequence belongs to the TRAFAC class myosin-kinesin ATPase superfamily. Kinesin family. As to quaternary structure, interacts with AP2B1. Interacts with ZFYVE26. Interacts with AP1G1 and AP1G2. Widely expressed, with highest levels in heart, brain and skeletal muscle.

Its subcellular location is the cytoplasm. It localises to the cytoskeleton. The protein localises to the microtubule organizing center. It is found in the centrosome. The protein resides in the midbody. Its subcellular location is the endosome membrane. It localises to the golgi apparatus membrane. Functionally, plus end-directed microtubule-dependent motor protein involved in intracellular transport and regulating various processes such as mannose-6-phosphate receptor (M6PR) transport to the plasma membrane, endosomal sorting during melanosome biogenesis and cytokinesis. Mediates the transport of M6PR-containing vesicles from trans-Golgi network to the plasma membrane via direct interaction with the AP-1 complex. During melanosome maturation, required for delivering melanogenic enzymes from recycling endosomes to nascent melanosomes by creating peripheral recycling endosomal subdomains in melanocytes. Also required for the abscission step in cytokinesis: mediates translocation of ZFYVE26, and possibly TTC19, to the midbody during cytokinesis. In Homo sapiens (Human), this protein is Kinesin-like protein KIF13A (KIF13A).